Consider the following 372-residue polypeptide: Cuticle collagen dpy-10 (372 aa).

A signal peptide spans Met-1–Ala-45. Triple-helical region stretches follow at residues Gly-144–Thr-173, Gly-195–Thr-251, and Gly-259–Cys-324. The disordered stretch occupies residues Gly-144 to Lys-372. The segment covering Glu-185 to Pro-196 has biased composition (pro residues). Low complexity predominate over residues Pro-197–Asp-208. Gly residues-rich tracts occupy residues Gly-237 to Gly-246 and Gly-283 to Gly-292. Residues Trp-293–Pro-303 show a composition bias toward low complexity. Gly residues predominate over residues Gly-353–Arg-363.

Belongs to the cuticular collagen family. As to quaternary structure, collagen polypeptide chains are complexed within the cuticle by disulfide bonds and other types of covalent cross-links.

Nematode cuticles are composed largely of collagen-like proteins. The cuticle functions both as an exoskeleton and as a barrier to protect the worm from its environment. The protein is Cuticle collagen dpy-10 (dpy-10) of Caenorhabditis elegans.